Consider the following 156-residue polypeptide: Protein-export protein SecB (156 aa).

The protein belongs to the SecB family. In terms of assembly, homotetramer, a dimer of dimers. One homotetramer interacts with 1 SecA dimer.

The protein resides in the cytoplasm. One of the proteins required for the normal export of preproteins out of the cell cytoplasm. It is a molecular chaperone that binds to a subset of precursor proteins, maintaining them in a translocation-competent state. It also specifically binds to its receptor SecA. The chain is Protein-export protein SecB from Paraburkholderia xenovorans (strain LB400).